The primary structure comprises 784 residues: Lon protease (784 aa).

The region spanning 11–204 (IPVLPLRDVV…YLMAMMESEI (194 aa)) is the Lon N-terminal domain. Residue 356–363 (GPPGVGKT) coordinates ATP. The 182-residue stretch at 592–773 (ENRVGQVTGL…EEVLTLALQN (182 aa)) folds into the Lon proteolytic domain. Residues serine 679 and lysine 722 contribute to the active site.

The protein belongs to the peptidase S16 family. As to quaternary structure, homohexamer. Organized in a ring with a central cavity. ATP binding and hydrolysis do not affect the oligomeric state of the enzyme.

The protein localises to the cytoplasm. It catalyses the reaction Hydrolysis of proteins in presence of ATP.. With respect to regulation, contains an allosteric site (distinct from its active site), whose occupancy by an unfolded polypeptide leads to enzyme activation. Its function is as follows. ATP-dependent serine protease that mediates the selective degradation of mutant and abnormal proteins as well as certain short-lived regulatory proteins. Required for cellular homeostasis and for survival from DNA damage and developmental changes induced by stress. Degrades polypeptides processively to yield small peptide fragments that are 5 to 10 amino acids long. Binds to DNA in a double-stranded, site-specific manner. Endogenous substrates include the regulatory proteins RcsA and SulA, the transcriptional activator SoxS, and UmuD. Its overproduction specifically inhibits translation through at least two different pathways, one of them being the YoeB-YefM toxin-antitoxin system. This Escherichia coli O6:H1 (strain CFT073 / ATCC 700928 / UPEC) protein is Lon protease.